The primary structure comprises 68 residues: Cytotoxic linear peptide (68 aa).

Residues 1–23 (MKTQFAILLIALVLFQMFSQSEA) form the signal peptide. Leucine amide is present on L36. A propeptide spanning residues 40-68 (GLNELDDLDELFDGEISQADIDFLKELMS) is cleaved from the precursor.

Belongs to the non-disulfide-bridged peptide (NDBP) superfamily. Short antimicrobial peptide (group 4) family. As to expression, expressed by the venom gland.

The protein localises to the secreted. The protein resides in the target cell membrane. In terms of biological role, amphipathic peptide that has antibacterial activities. The polypeptide is Cytotoxic linear peptide (Pandinus cavimanus (Tanzanian red clawed scorpion)).